The sequence spans 179 residues: MLQTTLKYRNRCNICVREYKCCIGSFMSRFGLSNMALTHYLTSIIHSFTSLAHQMLKRTNQDLPTPVKYYNPEIAKEYKKIEAAAEQKLLSMLPEEFQEDFRPFVISQQTSEEEAQIVKQADSICAYLKCLEELSAGNHEFALAKKRLDITLAERKTPEMDYFLNTFAPSFELSLDEIS.

Position 53 (His-53) interacts with a divalent metal cation. Substrate is bound by residues Asp-62–Thr-65 and Asp-122. Position 122 (Asp-122) interacts with a divalent metal cation.

This sequence belongs to the 5DNU family. As to quaternary structure, homodimer. It depends on a divalent metal cation as a cofactor.

The protein resides in the cytoplasm. The enzyme catalyses a 2'-deoxyribonucleoside 5'-phosphate + H2O = a 2'-deoxyribonucleoside + phosphate. Catalyzes the strictly specific dephosphorylation of 2'-deoxyribonucleoside 5'-monophosphates. This Vibrio vulnificus (strain CMCP6) protein is 5'-deoxynucleotidase VV1_0013.